Consider the following 300-residue polypeptide: Cation-efflux pump FieF (300 aa).

The chain crosses the membrane as a helical span at residues 24-44 (LLIKIFAWWYTGSVSILAALV). Positions 45 and 49 each coordinate Zn(2+). 2 helical membrane passes run 82 to 102 (AALA…LTSI) and 114 to 134 (PGVG…LVTF). Residues histidine 153 and aspartate 157 each coordinate Zn(2+). Transmembrane regions (helical) follow at residues 156–176 (SDVM…YGWH) and 178–198 (ADAL…LRMG).

It belongs to the cation diffusion facilitator (CDF) transporter (TC 2.A.4) family. FieF subfamily. Homodimer.

The protein localises to the cell inner membrane. It catalyses the reaction Zn(2+)(in) + H(+)(out) = Zn(2+)(out) + H(+)(in). The enzyme catalyses Cd(2+)(in) + H(+)(out) = Cd(2+)(out) + H(+)(in). It carries out the reaction Fe(2+)(in) + H(+)(out) = Fe(2+)(out) + H(+)(in). Its function is as follows. Divalent metal cation transporter which exports Zn(2+), Cd(2+) and possibly Fe(2+). May be involved in zinc and iron detoxification by efflux. In Salmonella schwarzengrund (strain CVM19633), this protein is Cation-efflux pump FieF.